A 234-amino-acid polypeptide reads, in one-letter code: Meiotically up-regulated gene 35 protein (234 aa).

Over residues D126–L156 the composition is skewed to basic and acidic residues. The tract at residues D126–H176 is disordered. S127 and S128 each carry phosphoserine. A Phosphothreonine modification is found at T132. Phosphoserine is present on S141.

The protein localises to the cytoplasm. Functionally, has a role in meiosis. The polypeptide is Meiotically up-regulated gene 35 protein (mug35) (Schizosaccharomyces pombe (strain 972 / ATCC 24843) (Fission yeast)).